The chain runs to 200 residues: Ras-related protein RHN1 (200 aa).

Residues 17–25 (GDMGAGKSS), 36–42 (LEFQEST), 65–69 (DTAGQ), 123–126 (NKAD), and 153–155 (SAK) each bind GTP. The Effector region motif lies at 39-47 (QESTIGAAF). Residues cysteine 198 and cysteine 199 are each lipidated (S-geranylgeranyl cysteine).

It belongs to the small GTPase superfamily. Rab family. In terms of tissue distribution, high in stem, root, and inflorescence.

Its subcellular location is the cell membrane. Functionally, protein transport. Probably involved in vesicular traffic. The protein is Ras-related protein RHN1 (RHN1) of Nicotiana plumbaginifolia (Leadwort-leaved tobacco).